A 652-amino-acid polypeptide reads, in one-letter code: Neuroendocrine convertase 2 (652 aa).

The first 22 residues, methionine 1 to alanine 22, serve as a signal peptide directing secretion. A propeptide spanning residues valine 23–arginine 107 is cleaved from the precursor. Residues glutamine 136–valine 481 form the Peptidase S8 domain. An N-linked (GlcNAc...) asparagine glycan is attached at asparagine 167. Active-site charge relay system residues include aspartate 174 and histidine 215. 2 disulfide bridges follow: cysteine 232–cysteine 382 and cysteine 324–cysteine 354. N-linked (GlcNAc...) asparagine glycosylation is present at asparagine 290. Serine 390 (charge relay system) is an active-site residue. Asparagine 451 carries an N-linked (GlcNAc...) asparagine glycan. Residues threonine 489–alanine 625 enclose the P/Homo B domain. A disulfide bridge connects residues cysteine 496 and cysteine 522. Positions isoleucine 501–histidine 652 are required for ubiquitination-mediated degradation. Residue asparagine 542 is glycosylated (N-linked (GlcNAc...) asparagine).

This sequence belongs to the peptidase S8 family. Furin subfamily. In terms of assembly, interacts (via C-terminus) with F-box protein fsn-1 (via SPRY domain); the interaction results in egl-3 proteasomal degradation. Ubiquitinated. As to expression, expressed in head and tail ganglia. Expressed in neurons including mechanosensory and motor neurons, and interneurons (at protein level). Expressed in the nerve ring, ventral nerve cord and intestine.

The protein resides in the cell projection. It is found in the axon. It localises to the cytoplasmic vesicle. Its subcellular location is the secretory vesicle lumen. The protein localises to the secreted. The catalysed reaction is Release of protein hormones and neuropeptides from their precursors, generally by hydrolysis of -Lys-Arg-|- bonds.. Serine endoprotease which cleaves preproteins at paired basic amino acids. Processes FMRFamide-like (flp) and neuropeptide-like protein (nlp) neuropeptides. Probably by processing flp-1 and flp-18, modulates the neuronal excitation-inhibition balance and thus the level of activity of the locomotor circuit. Regulates sensitivity to mechanosensory stimuli. By processing neuropeptides, modulates basal acetylcholine release at the ventral cord neuromuscular junctions. Probably by processing flp neuropeptides, regulates the turning step of male mating behavior. Cleaves pro-insulin-like proteins ins-3, ins-4 and ins-6 into their mature active forms. Together with convertase kpc-1, cleaves pro-insulin-like protein ins-18. By controlling ins-4 and ins-6 processing and thus the activation of the daf-2/InsR pathway, negatively modulates synapse development and synaptic transmission at neuromuscular junctions. Similarly, by controlling ins-4 and ins-6 processing, negatively regulates dauer formation under optimal environmental conditions. Under adverse environmental conditions, may promote dauer formation by processing ins-18, a daf-2/InsR antagonist. May cleave dense-core vesicle membrane protein ida-1. Involved in egg-laying, fat storage and locomotion. This is Neuroendocrine convertase 2 from Caenorhabditis elegans.